The primary structure comprises 345 residues: Anthranilate phosphoribosyltransferase (345 aa).

Residues Gly-84, 87–88, Thr-92, 94–97, 112–120, and Ser-124 contribute to the 5-phospho-alpha-D-ribose 1-diphosphate site; these read GD, NIST, and KHGNRSVSS. Gly-84 contributes to the anthranilate binding site. Position 96 (Ser-96) interacts with Mg(2+). Asn-115 provides a ligand contact to anthranilate. Position 170 (Arg-170) interacts with anthranilate. 2 residues coordinate Mg(2+): Asp-229 and Glu-230.

The protein belongs to the anthranilate phosphoribosyltransferase family. In terms of assembly, homodimer. The cofactor is Mg(2+).

The catalysed reaction is N-(5-phospho-beta-D-ribosyl)anthranilate + diphosphate = 5-phospho-alpha-D-ribose 1-diphosphate + anthranilate. It participates in amino-acid biosynthesis; L-tryptophan biosynthesis; L-tryptophan from chorismate: step 2/5. Its function is as follows. Catalyzes the transfer of the phosphoribosyl group of 5-phosphorylribose-1-pyrophosphate (PRPP) to anthranilate to yield N-(5'-phosphoribosyl)-anthranilate (PRA). This Xanthomonas campestris pv. campestris (strain 8004) protein is Anthranilate phosphoribosyltransferase.